The primary structure comprises 443 residues: Chromosome partition protein MukF (443 aa).

The segment at 209 to 237 is leucine-zipper; sequence LDETSINLRELQDTLNAAGDKLQSQLLRI.

It belongs to the MukF family. As to quaternary structure, interacts, and probably forms a ternary complex, with MukE and MukB via its C-terminal region. The complex formation is stimulated by calcium or magnesium. It is required for an interaction between MukE and MukB.

It localises to the cytoplasm. It is found in the nucleoid. Its function is as follows. Involved in chromosome condensation, segregation and cell cycle progression. May participate in facilitating chromosome segregation by condensation DNA from both sides of a centrally located replisome during cell division. Not required for mini-F plasmid partitioning. Probably acts via its interaction with MukB and MukE. Overexpression results in anucleate cells. It has a calcium binding activity. This chain is Chromosome partition protein MukF, found in Haemophilus ducreyi (strain 35000HP / ATCC 700724).